The following is a 270-amino-acid chain: SPbeta prophage-derived DNA ligase-like protein LigB (270 aa).

The active-site N6-AMP-lysine intermediate is Lys25.

The protein belongs to the ATP-dependent DNA ligase family.

This is SPbeta prophage-derived DNA ligase-like protein LigB (ligB) from Bacillus subtilis (strain 168).